We begin with the raw amino-acid sequence, 177 residues long: Isopentenyl-diphosphate Delta-isomerase (177 aa).

Residues H22 and H28 each coordinate Mn(2+). The Nudix hydrolase domain occupies 26-160 (LRHMAISVFV…PERFTPWLRI (135 aa)). Residue C62 is part of the active site. H64 is a binding site for Mn(2+). A Mg(2+)-binding site is contributed by E82. The Mn(2+) site is built by E108 and E110. E110 is an active-site residue.

This sequence belongs to the IPP isomerase type 1 family. Requires Mg(2+) as cofactor. Mn(2+) is required as a cofactor.

It is found in the cytoplasm. It catalyses the reaction isopentenyl diphosphate = dimethylallyl diphosphate. The protein operates within isoprenoid biosynthesis; dimethylallyl diphosphate biosynthesis; dimethylallyl diphosphate from isopentenyl diphosphate: step 1/1. Its pathway is porphyrin-containing compound metabolism; chlorophyll biosynthesis. Catalyzes the 1,3-allylic rearrangement of the homoallylic substrate isopentenyl (IPP) to its highly electrophilic allylic isomer, dimethylallyl diphosphate (DMAPP). This Cereibacter sphaeroides (strain ATCC 17029 / ATH 2.4.9) (Rhodobacter sphaeroides) protein is Isopentenyl-diphosphate Delta-isomerase.